The following is a 519-amino-acid chain: Probable cytosol aminopeptidase (519 aa).

The Mn(2+) site is built by Lys-283 and Asp-288. The active site involves Lys-295. Asp-306, Asp-365, and Glu-367 together coordinate Mn(2+). Arg-369 is an active-site residue.

This sequence belongs to the peptidase M17 family. Mn(2+) serves as cofactor.

Its subcellular location is the cytoplasm. The catalysed reaction is Release of an N-terminal amino acid, Xaa-|-Yaa-, in which Xaa is preferably Leu, but may be other amino acids including Pro although not Arg or Lys, and Yaa may be Pro. Amino acid amides and methyl esters are also readily hydrolyzed, but rates on arylamides are exceedingly low.. It catalyses the reaction Release of an N-terminal amino acid, preferentially leucine, but not glutamic or aspartic acids.. Its function is as follows. Presumably involved in the processing and regular turnover of intracellular proteins. Catalyzes the removal of unsubstituted N-terminal amino acids from various peptides. This is Probable cytosol aminopeptidase from Mycobacterium marinum (strain ATCC BAA-535 / M).